Consider the following 25-residue polypeptide: Bifunctional chitinase/lysozyme (25 aa).

Belongs to the glycosyl hydrolase 19 family. Chitinase class I subfamily. Monomer.

It is found in the secreted. The protein resides in the extracellular space. The enzyme catalyses Random endo-hydrolysis of N-acetyl-beta-D-glucosaminide (1-&gt;4)-beta-linkages in chitin and chitodextrins.. It catalyses the reaction Hydrolysis of (1-&gt;4)-beta-linkages between N-acetylmuramic acid and N-acetyl-D-glucosamine residues in a peptidoglycan and between N-acetyl-D-glucosamine residues in chitodextrins.. Functionally, bifunctional enzyme with lysozyme/chitinase activity. The chain is Bifunctional chitinase/lysozyme from Carica papaya (Papaya).